The chain runs to 466 residues: Myocardial zonula adherens protein (466 aa).

Residues 1–10 are compositionally biased toward polar residues; that stretch reads MLRSTSTVTL. A signal peptide spans 1–20; sequence MLRSTSTVTLLSGGAARTPG. The interval 1–23 is disordered; sequence MLRSTSTVTLLSGGAARTPGAPS. 2 coiled-coil regions span residues 96 to 142 and 174 to 418; these read QLKE…SHAQ and LQKT…TQAK. The Required for DYNLL1-binding motif lies at 424–425; it reads RE.

It belongs to the MYZAP family. Interacts with DSP, MPRIP and TJP1/ZO1. Interaction with MPRIP inhibits the activation of transcription factor SRF. Interacts with GRIN1. Interacts with DYNLL1. As to expression, detected in heart, liver, skeletal muscle, placenta, small intestine, lung, prostate and testis. Expressed in arrector pili muscle (at protein level).

It is found in the cytoplasm. Its subcellular location is the cytoskeleton. The protein resides in the cell membrane. The protein localises to the myofibril. It localises to the sarcomere. It is found in the i band. Its subcellular location is the z line. The protein resides in the cell junction. Its function is as follows. Plays a role in cellular signaling via Rho-related GTP-binding proteins and subsequent activation of transcription factor SRF. Targets TJP1 to cell junctions. In cortical neurons, may play a role in glutaminergic signal transduction through interaction with the NMDA receptor subunit GRIN1. The polypeptide is Myocardial zonula adherens protein (MYZAP) (Homo sapiens (Human)).